Consider the following 80-residue polypeptide: Exodeoxyribonuclease 7 small subunit (80 aa).

It belongs to the XseB family. In terms of assembly, heterooligomer composed of large and small subunits.

It localises to the cytoplasm. The catalysed reaction is Exonucleolytic cleavage in either 5'- to 3'- or 3'- to 5'-direction to yield nucleoside 5'-phosphates.. Bidirectionally degrades single-stranded DNA into large acid-insoluble oligonucleotides, which are then degraded further into small acid-soluble oligonucleotides. This is Exodeoxyribonuclease 7 small subunit from Marinomonas sp. (strain MWYL1).